Consider the following 440-residue polypeptide: tRNA (guanine(37)-N(1))-methyltransferase (440 aa).

Residues histidine 217, aspartate 255–leucine 256, aspartate 283–glycine 284, and asparagine 315 each bind S-adenosyl-L-methionine.

Belongs to the class I-like SAM-binding methyltransferase superfamily. TRM5/TYW2 family. Monomer.

It localises to the mitochondrion matrix. Its subcellular location is the nucleus. It is found in the cytoplasm. The catalysed reaction is guanosine(37) in tRNA + S-adenosyl-L-methionine = N(1)-methylguanosine(37) in tRNA + S-adenosyl-L-homocysteine + H(+). Its function is as follows. Specifically methylates the N1 position of guanosine-37 in various cytoplasmic and mitochondrial tRNAs. Methylation is not dependent on the nature of the nucleoside 5' of the target nucleoside. This is the first step in the biosynthesis of wybutosine (yW), a modified base adjacent to the anticodon of tRNAs and required for accurate decoding. In Drosophila pseudoobscura pseudoobscura (Fruit fly), this protein is tRNA (guanine(37)-N(1))-methyltransferase.